We begin with the raw amino-acid sequence, 126 residues long: Fluoride-specific ion channel FluC (126 aa).

A run of 4 helical transmembrane segments spans residues 4-24, 33-53, 67-87, and 97-117; these read PLLS…FLGL, IPLG…FAMA, FVIT…IEIV, and MAML…CLGL. G74 and T77 together coordinate Na(+).

This sequence belongs to the fluoride channel Fluc/FEX (TC 1.A.43) family.

It localises to the cell inner membrane. The catalysed reaction is fluoride(in) = fluoride(out). With respect to regulation, na(+) is not transported, but it plays an essential structural role and its presence is essential for fluoride channel function. Functionally, fluoride-specific ion channel. Important for reducing fluoride concentration in the cell, thus reducing its toxicity. The polypeptide is Fluoride-specific ion channel FluC (Acinetobacter baumannii (strain SDF)).